Reading from the N-terminus, the 598-residue chain is Aspartate--tRNA(Asp/Asn) ligase (598 aa).

E177 contributes to the L-aspartate binding site. Positions 201 to 204 (QLFK) are aspartate. R223 contacts L-aspartate. ATP contacts are provided by residues 223 to 225 (RDE) and Q232. H456 is an L-aspartate binding site. ATP is bound at residue E493. L-aspartate is bound at residue R500. 545–548 (GLDR) lines the ATP pocket.

This sequence belongs to the class-II aminoacyl-tRNA synthetase family. Type 1 subfamily. In terms of assembly, homodimer.

The protein localises to the cytoplasm. It catalyses the reaction tRNA(Asx) + L-aspartate + ATP = L-aspartyl-tRNA(Asx) + AMP + diphosphate. Its function is as follows. Aspartyl-tRNA synthetase with relaxed tRNA specificity since it is able to aspartylate not only its cognate tRNA(Asp) but also tRNA(Asn). Reaction proceeds in two steps: L-aspartate is first activated by ATP to form Asp-AMP and then transferred to the acceptor end of tRNA(Asp/Asn). This chain is Aspartate--tRNA(Asp/Asn) ligase, found in Prochlorococcus marinus (strain MIT 9215).